A 158-amino-acid chain; its full sequence is 2-C-methyl-D-erythritol 2,4-cyclodiphosphate synthase (158 aa).

2 residues coordinate a divalent metal cation: Asp-8 and His-10. Residues 8–10 (DVH) and 34–35 (HS) each bind 4-CDP-2-C-methyl-D-erythritol 2-phosphate. His-42 lines the a divalent metal cation pocket. 4-CDP-2-C-methyl-D-erythritol 2-phosphate-binding positions include 56–58 (DIG), 61–65 (FPDTD), 100–106 (AQAPKMA), 132–135 (TTSE), Phe-139, and Arg-142.

This sequence belongs to the IspF family. Homotrimer. A divalent metal cation serves as cofactor.

The catalysed reaction is 4-CDP-2-C-methyl-D-erythritol 2-phosphate = 2-C-methyl-D-erythritol 2,4-cyclic diphosphate + CMP. The protein operates within isoprenoid biosynthesis; isopentenyl diphosphate biosynthesis via DXP pathway; isopentenyl diphosphate from 1-deoxy-D-xylulose 5-phosphate: step 4/6. Involved in the biosynthesis of isopentenyl diphosphate (IPP) and dimethylallyl diphosphate (DMAPP), two major building blocks of isoprenoid compounds. Catalyzes the conversion of 4-diphosphocytidyl-2-C-methyl-D-erythritol 2-phosphate (CDP-ME2P) to 2-C-methyl-D-erythritol 2,4-cyclodiphosphate (ME-CPP) with a corresponding release of cytidine 5-monophosphate (CMP). The protein is 2-C-methyl-D-erythritol 2,4-cyclodiphosphate synthase of Aliivibrio fischeri (strain ATCC 700601 / ES114) (Vibrio fischeri).